The following is a 126-amino-acid chain: Cystatin-C (126 aa).

The first 18 residues, 1–18 (MKMLVFPVLAALFAVGLG), serve as a signal peptide directing secretion. The 94-residue stretch at 22 to 115 (GAPRDINISE…CTFSVWSRPW (94 aa)) folds into the Cystatin domain. The Secondary area of contact signature appears at 64-68 (QVVSG). Intrachain disulfides connect Cys-82–Cys-92 and Cys-106–Cys-126.

The protein belongs to the cystatin family. In terms of tissue distribution, ubiquitously expressed in normal tissues including brain, eye, gill, heart, gullet, liver, spleen, stomach, pyloric ceca, intestine, kidney and muscle. Expressed, but not up-regulated, in lipopolysaccharide (LPS)-stimulated tissues including kidney, spleen, muscle and gill.

Its subcellular location is the secreted. Functionally, thiol protease inhibitor. Has high papain inhibitory activity and inhibits to a lesser extent fish cathepsins L, S, K, F, X and bovine cathepsin B in vitro. In Paralichthys olivaceus (Bastard halibut), this protein is Cystatin-C.